The chain runs to 130 residues: uncharacterized protein (130 aa).

The N-terminal stretch at 1–23 is a signal peptide; it reads MINRKVVYALSALLLFVYSYAFI.

This is an uncharacterized protein from Aquifex aeolicus (strain VF5).